The sequence spans 339 residues: tRNA N6-adenosine threonylcarbamoyltransferase (339 aa).

His111 and His115 together coordinate Fe cation. Residues 134-138 (LVSGG), Asp167, Gly180, and Asn270 each bind substrate. A Fe cation-binding site is contributed by Asp298.

The protein belongs to the KAE1 / TsaD family. It depends on Fe(2+) as a cofactor.

It localises to the cytoplasm. It catalyses the reaction L-threonylcarbamoyladenylate + adenosine(37) in tRNA = N(6)-L-threonylcarbamoyladenosine(37) in tRNA + AMP + H(+). Functionally, required for the formation of a threonylcarbamoyl group on adenosine at position 37 (t(6)A37) in tRNAs that read codons beginning with adenine. Is involved in the transfer of the threonylcarbamoyl moiety of threonylcarbamoyl-AMP (TC-AMP) to the N6 group of A37, together with TsaE and TsaB. TsaD likely plays a direct catalytic role in this reaction. The polypeptide is tRNA N6-adenosine threonylcarbamoyltransferase (Alkalilimnicola ehrlichii (strain ATCC BAA-1101 / DSM 17681 / MLHE-1)).